A 381-amino-acid polypeptide reads, in one-letter code: Alkanesulfonate monooxygenase (381 aa).

It belongs to the SsuD family. Homotetramer.

The enzyme catalyses an alkanesulfonate + FMNH2 + O2 = an aldehyde + FMN + sulfite + H2O + 2 H(+). Catalyzes the desulfonation of aliphatic sulfonates. This is Alkanesulfonate monooxygenase from Escherichia coli O6:K15:H31 (strain 536 / UPEC).